An 881-amino-acid polypeptide reads, in one-letter code: Armadillo repeat-containing protein 3 (881 aa).

ARM repeat units lie at residues 15 to 54 (DVFD…KFAL), 57 to 96 (EENK…ILAS), 98 to 138 (SDVK…NMSV), 140 to 179 (YTGK…NLVQ), 181 to 220 (FQCR…VITC), 222 to 262 (KEAR…NCLE), 264 to 304 (MDTM…KAAY), 306 to 345 (PENR…ALCE), 346 to 385 (NLSC…NLTT), 388 to 427 (PANA…NMAT), 429 to 468 (EPLR…ATAC), and 470 to 509 (VEAR…VCAG). 2 S-palmitoyl cysteine lipidation sites follow: cysteine 507 and cysteine 518. The tract at residues 605–659 (NNKSDTSPPPSMEDKSSDVGYGRSISSSSSLRRGSKEKANAIFGSPTEEKSEPAS) is disordered. Low complexity predominate over residues 622 to 636 (DVGYGRSISSSSSLR).

In terms of assembly, homodimer. Interacts with PIK3C3, PIK3R4 and BECN1. Interacts (via ARM domains) with ATG14. Palmitoylation is important for its function in autophagy. As to expression, testis-specific.

In terms of biological role, essential for male fertility and sperm motility. During spermatogenesis, promotes the autophagic degradation of excessive ribosomes, providing energy resources for mitochondria and thus ensuring sperm flagellar motility. This is Armadillo repeat-containing protein 3 (Armc3) from Mus musculus (Mouse).